A 253-amino-acid polypeptide reads, in one-letter code: Triosephosphate isomerase (253 aa).

A substrate-binding site is contributed by Asn-15–Lys-17. His-101 functions as the Electrophile in the catalytic mechanism. Glu-171 acts as the Proton acceptor in catalysis. Substrate is bound by residues Gly-177, Ser-216, and Gly-237–Gly-238.

The protein belongs to the triosephosphate isomerase family. Homodimer.

It is found in the cytoplasm. It carries out the reaction D-glyceraldehyde 3-phosphate = dihydroxyacetone phosphate. It functions in the pathway carbohydrate biosynthesis; gluconeogenesis. Its pathway is carbohydrate degradation; glycolysis; D-glyceraldehyde 3-phosphate from glycerone phosphate: step 1/1. Involved in the gluconeogenesis. Catalyzes stereospecifically the conversion of dihydroxyacetone phosphate (DHAP) to D-glyceraldehyde-3-phosphate (G3P). The polypeptide is Triosephosphate isomerase (Caulobacter vibrioides (strain ATCC 19089 / CIP 103742 / CB 15) (Caulobacter crescentus)).